Reading from the N-terminus, the 235-residue chain is C-&gt;U-editing enzyme APOBEC-1 (235 aa).

Positions 10 to 131 (GDATLRRRIK…MDQQHRQGLK (122 aa)) constitute a CMP/dCMP-type deaminase domain. Zn(2+) is bound at residue His60. Glu62 serves as the catalytic Proton donor. Zn(2+) is bound by residues Cys92 and Cys95.

Belongs to the cytidine and deoxycytidylate deaminase family. In terms of assembly, homodimer. Interacts with A1CF; form an mRNA editing complex. Interacts with RBM47; form an mRNA editing complex. Found in a complex with CELF2/CUGBP2 and A1CF. Interacts with HNRPAB. Interacts with SYNCRIP. It depends on Zn(2+) as a cofactor.

The protein localises to the cytoplasm. It localises to the nucleus. It catalyses the reaction a cytidine in mRNA + H2O + H(+) = a uridine in mRNA + NH4(+). The enzyme catalyses cytidine(6666) in apoB mRNA + H2O + H(+) = uridine(6666) in apoB mRNA + NH4(+). In terms of biological role, cytidine deaminase catalyzing the cytidine to uridine postranscriptional editing of a variety of mRNAs. Form complexes with cofactors that confer differential editing activity and selectivity. Responsible for the postranscriptional editing of a CAA codon for Gln to a UAA codon for stop in the apolipoprotein B mRNA. Also involved in CGA (Arg) to UGA (Stop) editing in the NF1 mRNA. May also play a role in the epigenetic regulation of gene expression by participating in DNA demethylation. The chain is C-&gt;U-editing enzyme APOBEC-1 from Monodelphis domestica (Gray short-tailed opossum).